A 314-amino-acid chain; its full sequence is Methionyl-tRNA formyltransferase (314 aa).

111–114 (SLLP) serves as a coordination point for (6S)-5,6,7,8-tetrahydrofolate.

Belongs to the Fmt family.

It carries out the reaction L-methionyl-tRNA(fMet) + (6R)-10-formyltetrahydrofolate = N-formyl-L-methionyl-tRNA(fMet) + (6S)-5,6,7,8-tetrahydrofolate + H(+). In terms of biological role, attaches a formyl group to the free amino group of methionyl-tRNA(fMet). The formyl group appears to play a dual role in the initiator identity of N-formylmethionyl-tRNA by promoting its recognition by IF2 and preventing the misappropriation of this tRNA by the elongation apparatus. In Chlorobium luteolum (strain DSM 273 / BCRC 81028 / 2530) (Pelodictyon luteolum), this protein is Methionyl-tRNA formyltransferase.